The chain runs to 268 residues: UPF0328 protein ECU03_0040 (268 aa).

This sequence belongs to the UPF0328 family.

In Encephalitozoon cuniculi (strain GB-M1) (Microsporidian parasite), this protein is UPF0328 protein ECU03_0040.